The following is a 327-amino-acid chain: rRNA 2'-O-methyltransferase fibrillarin (327 aa).

The interval 1–93 (MKPGFSPRGG…RGNQSGKNVM (93 aa)) is disordered. A compositionally biased stretch (gly residues) spans 7–80 (PRGGGFGGRG…GGGRGRGGGR (74 aa)). Asymmetric dimethylarginine occurs at positions 8, 15, 21, 24, 28, and 31. Glycyl lysine isopeptide (Lys-Gly) (interchain with G-Cter in SUMO2) cross-links involve residues lysine 90, lysine 108, and lysine 115. Lysine 108 is modified (N6-acetyllysine). Serine 122 carries the phosphoserine modification. Lysine 127 bears the N6-acetyllysine mark. Residues serine 130 and serine 132 each carry the phosphoserine modification. Glycyl lysine isopeptide (Lys-Gly) (interchain with G-Cter in SUMO2) cross-links involve residues lysine 137, lysine 149, and lysine 164. Residues 178 to 179 (TT) and 197 to 198 (EF) each bind S-adenosyl-L-methionine. An N6-acetyllysine mark is found at lysine 211 and lysine 212. S-adenosyl-L-methionine-binding positions include 222–223 (DA) and 242–245 (DVAQ).

It belongs to the methyltransferase superfamily. Fibrillarin family. Component of box C/D small nucleolar ribonucleoprotein (snoRNP) particles that contain SNU13, FBL, NOP5 and NOP56, plus a guide RNA. It is associated with the U3, U8, U13, X and Y small nuclear RNAs. Component of several ribosomal and nucleolar protein complexes. Part of the small subunit (SSU) processome, composed of more than 70 proteins and the RNA chaperone small nucleolar RNA (snoRNA) U3. Interacts with PRMT5 and UTP20. Interacts with DDX5 and C1QBP. Interacts with NOL11. Interacts with PIH1D1. Interacts with RRP1B. Interacts with NOLC1. Interacts with SDE2. Interacts with NOP2 and NOP56. Post-translationally, ubiquitinated. Ubiquitination leads to proteasomal degradation. Deubiquitinated by USP36. By homology to other fibrillarins, some or all of the N-terminal domain arginines are modified to asymmetric dimethylarginine (DMA). In terms of processing, acetylated by CREBBP/CBP, preventing methylation of 'Gln-105' of histone H2A (H2AQ104me), without affecting rRNA methylation. Deacetylation by SIRT7 restores methylation of 'Gln-105' of histone H2A (H2AQ104me).

The protein resides in the nucleus. Its subcellular location is the nucleolus. It is found in the nucleoplasm. It catalyses the reaction L-glutaminyl-[histone H2A] + S-adenosyl-L-methionine = N(5)-methyl-L-glutaminyl-[histone H2A] + S-adenosyl-L-homocysteine + H(+). The catalysed reaction is a ribonucleotide in rRNA + S-adenosyl-L-methionine = a 2'-O-methylribonucleotide in rRNA + S-adenosyl-L-homocysteine + H(+). The enzyme catalyses a ribonucleotide in U6 snRNA + S-adenosyl-L-methionine = a 2'-O-methylribonucleotide in U6 snRNA + S-adenosyl-L-homocysteine + H(+). Its function is as follows. S-adenosyl-L-methionine-dependent methyltransferase that has the ability to methylate both RNAs and proteins. Involved in pre-rRNA processing by catalyzing the site-specific 2'-hydroxyl methylation of ribose moieties in pre-ribosomal RNA. Site specificity is provided by a guide RNA that base pairs with the substrate. Methylation occurs at a characteristic distance from the sequence involved in base pairing with the guide RNA. Probably catalyzes 2'-O-methylation of U6 snRNAs in box C/D RNP complexes. U6 snRNA 2'-O-methylation is required for mRNA splicing fidelity. Also acts as a protein methyltransferase by mediating methylation of 'Gln-105' of histone H2A (H2AQ104me), a modification that impairs binding of the FACT complex and is specifically present at 35S ribosomal DNA locus. Part of the small subunit (SSU) processome, first precursor of the small eukaryotic ribosomal subunit. During the assembly of the SSU processome in the nucleolus, many ribosome biogenesis factors, an RNA chaperone and ribosomal proteins associate with the nascent pre-rRNA and work in concert to generate RNA folding, modifications, rearrangements and cleavage as well as targeted degradation of pre-ribosomal RNA by the RNA exosome. This Rattus norvegicus (Rat) protein is rRNA 2'-O-methyltransferase fibrillarin (Fbl).